The sequence spans 267 residues: Ribosomal RNA small subunit methyltransferase J (267 aa).

Residues 133–134 and Asp-187 each bind S-adenosyl-L-methionine; that span reads ER.

It belongs to the methyltransferase superfamily. RsmJ family.

The protein resides in the cytoplasm. The catalysed reaction is guanosine(1516) in 16S rRNA + S-adenosyl-L-methionine = N(2)-methylguanosine(1516) in 16S rRNA + S-adenosyl-L-homocysteine + H(+). Functionally, specifically methylates the guanosine in position 1516 of 16S rRNA. In Halorhodospira halophila (strain DSM 244 / SL1) (Ectothiorhodospira halophila (strain DSM 244 / SL1)), this protein is Ribosomal RNA small subunit methyltransferase J.